The chain runs to 269 residues: UPF0162 protein BU173 (269 aa).

This sequence belongs to the UPF0162 family.

The chain is UPF0162 protein BU173 from Buchnera aphidicola subsp. Acyrthosiphon pisum (strain APS) (Acyrthosiphon pisum symbiotic bacterium).